A 113-amino-acid polypeptide reads, in one-letter code: Beta-defensin 112 (113 aa).

3 disulfide bridges follow: C54-C82, C61-C75, and C65-C83.

Belongs to the beta-defensin family.

The protein resides in the secreted. Has antibacterial activity. This is Beta-defensin 112 (DEFB112) from Homo sapiens (Human).